We begin with the raw amino-acid sequence, 617 residues long: MDLQEKLKLLPEKPGVYLMKDEEGNIIYVGKASVLKNRVRQYFQNTDNHPPKVKVMLSHVEDFEYIVTDTELEALMLECNLIKKYKPKYNVLLKDDKNYPYIKITVAEDYPRIMFTRKIDMDGSKYFGPYGSAFAVRETIKLVRKMFPIRTCNVNIEKSLGKVRECLYYHIGLCSAPCTGRIEKEEYRKLVDQAVMFLEGKREWLVEKLKEEMQKAADELRFEEAARLRDQIFAIEKISEKQKVTSINEDEQDVISMARSDDIAHIEVFFVREGKLSGREHYYMKNTEGMGREEIISSFIKQFYESSPSVPKEIIIDVELEEKDLLEDWLSQKRGNRVSITVPLRGKKKELVDMVYQNAVEALKNEILAREKILKDPAVLELSNLLGIEYPKRIEAYDISNVRGEDNVGSMVVFVDGKPKKSEYRKFTIKYVEGQDDYQSMREMIERRFLHALEEKKQIEEGTLSKEKAKFIEMPDLILVDGGIGHVNAALEVIEKLGISVPVYGMVKDSRHRTRGLVGVSGEVQMPVTGRAFRLVAQIQEEAHRFAITFHRERQSKRFKTDLLNIKGIGEKRAKVLYEAFGSIEEIKKASLEELKKVKGMNERSAKAVYEYFHGEV.

In terms of domain architecture, GIY-YIG spans 12 to 91; that stretch reads EKPGVYLMKD…IKKYKPKYNV (80 aa). A UVR domain is found at 203-238; sequence EWLVEKLKEEMQKAADELRFEEAARLRDQIFAIEKI.

The protein belongs to the UvrC family. In terms of assembly, interacts with UvrB in an incision complex.

It localises to the cytoplasm. Functionally, the UvrABC repair system catalyzes the recognition and processing of DNA lesions. UvrC both incises the 5' and 3' sides of the lesion. The N-terminal half is responsible for the 3' incision and the C-terminal half is responsible for the 5' incision. The chain is UvrABC system protein C from Caldanaerobacter subterraneus subsp. tengcongensis (strain DSM 15242 / JCM 11007 / NBRC 100824 / MB4) (Thermoanaerobacter tengcongensis).